The following is a 128-amino-acid chain: Gastrotropin (128 aa).

Ala-2 is modified (N-acetylalanine).

The protein belongs to the calycin superfamily. Fatty-acid binding protein (FABP) family. Found exclusively in the ileum and to a lesser extent in distal jejunum.

Its subcellular location is the cytoplasm. The protein resides in the membrane. In terms of biological role, binds to bile acids and is involved in enterohepatic bile acid metabolism. Required for efficient apical to basolateral transport of conjugated bile acids in ileal enterocytes. Stimulates gastric acid and pepsinogen secretion. This Sus scrofa (Pig) protein is Gastrotropin (FABP6).